The chain runs to 125 residues: Large ribosomal subunit protein bL20 (125 aa).

It belongs to the bacterial ribosomal protein bL20 family.

Binds directly to 23S ribosomal RNA and is necessary for the in vitro assembly process of the 50S ribosomal subunit. It is not involved in the protein synthesizing functions of that subunit. The protein is Large ribosomal subunit protein bL20 of Thermobifida fusca (strain YX).